Consider the following 186-residue polypeptide: Pyridoxal 5'-phosphate synthase subunit PdxT (186 aa).

Residue 46 to 48 (GES) participates in L-glutamine binding. C75 functions as the Nucleophile in the catalytic mechanism. Residues R101 and 127–128 (IR) contribute to the L-glutamine site. Catalysis depends on charge relay system residues H164 and E166.

The protein belongs to the glutaminase PdxT/SNO family. In terms of assembly, in the presence of PdxS, forms a dodecamer of heterodimers. Only shows activity in the heterodimer.

The enzyme catalyses aldehydo-D-ribose 5-phosphate + D-glyceraldehyde 3-phosphate + L-glutamine = pyridoxal 5'-phosphate + L-glutamate + phosphate + 3 H2O + H(+). It carries out the reaction L-glutamine + H2O = L-glutamate + NH4(+). It functions in the pathway cofactor biosynthesis; pyridoxal 5'-phosphate biosynthesis. Functionally, catalyzes the hydrolysis of glutamine to glutamate and ammonia as part of the biosynthesis of pyridoxal 5'-phosphate. The resulting ammonia molecule is channeled to the active site of PdxS. The sequence is that of Pyridoxal 5'-phosphate synthase subunit PdxT from Methanococcus aeolicus (strain ATCC BAA-1280 / DSM 17508 / OCM 812 / Nankai-3).